The primary structure comprises 353 residues: Protein O-mannose kinase (353 aa).

The Cytoplasmic segment spans residues 1-19 (MEKKAHFVKRDFPPREAPS). Residues 20-40 (LLLLLLVVAVLLLNALLYLYL) form a helical; Signal-anchor for type II membrane protein membrane-spanning segment. Residues 41–353 (GNLHGSSGRA…AAMPSTREML (313 aa)) are Lumenal-facing. In terms of domain architecture, Protein kinase spans 83 to 353 (VRKLKCVGEG…AAMPSTREML (271 aa)). Residues Asn163 and Asn237 are each glycosylated (N-linked (GlcNAc...) asparagine).

Belongs to the protein kinase superfamily. Ser/Thr protein kinase family. STKL subfamily.

The protein resides in the endoplasmic reticulum membrane. It catalyses the reaction 3-O-[beta-D-GalNAc-(1-&gt;3)-beta-D-GlcNAc-(1-&gt;4)-alpha-D-Man]-L-Thr-[protein] + ATP = 3-O-[beta-D-GalNAc-(1-&gt;3)-beta-D-GlcNAc-(1-&gt;4)-(O-6-P-alpha-D-Man)]-Thr-[protein] + ADP + H(+). In terms of biological role, protein O-mannose kinase that specifically mediates phosphorylation at the 6-position of an O-mannose of the trisaccharide (N-acetylgalactosamine (GalNAc)-beta-1,3-N-acetylglucosamine (GlcNAc)-beta-1,4-mannose) to generate phosphorylated O-mannosyl trisaccharide (N-acetylgalactosamine-beta-1,3-N-acetylglucosamine-beta-1,4-(phosphate-6-)mannose). Phosphorylated O-mannosyl trisaccharide is a carbohydrate structure present in alpha-dystroglycan (DAG1), which is required for binding laminin G-like domain-containing extracellular proteins with high affinity. Only shows kinase activity when the GalNAc-beta-3-GlcNAc-beta-terminus is linked to the 4-position of O-mannose, suggesting that this disaccharide serves as the substrate recognition motif. This Gallus gallus (Chicken) protein is Protein O-mannose kinase (POMK).